Here is a 327-residue protein sequence, read N- to C-terminus: tRNA uridine(34) hydroxylase (327 aa).

The Rhodanese domain occupies 122–218; that stretch reads QENRCLVLDV…YGLKMGTGKW (97 aa). The active-site Cysteine persulfide intermediate is the C178.

The protein belongs to the TrhO family.

The enzyme catalyses uridine(34) in tRNA + AH2 + O2 = 5-hydroxyuridine(34) in tRNA + A + H2O. In terms of biological role, catalyzes oxygen-dependent 5-hydroxyuridine (ho5U) modification at position 34 in tRNAs. This is tRNA uridine(34) hydroxylase from Chlamydia trachomatis serovar A (strain ATCC VR-571B / DSM 19440 / HAR-13).